The primary structure comprises 285 residues: Iodotyrosine deiodinase 1 (285 aa).

A helical membrane pass occupies residues 1-21 (MFLLTPVLVAVVCILVIWVFK). Residues 96–100 (RRSIR) and 124–125 (SG) each bind FMN. The 3,5-diiodo-L-tyrosine site is built by alanine 126, glutamate 153, tyrosine 157, and lysine 178. 4 residues coordinate 3-iodo-L-tyrosine: alanine 126, glutamate 153, tyrosine 157, and lysine 178. FMN-binding positions include 233–235 (TTT) and arginine 275.

It belongs to the nitroreductase family. In terms of assembly, homodimer. FMN is required as a cofactor.

It localises to the cell membrane. The protein resides in the cytoplasmic vesicle membrane. It catalyses the reaction 2 iodide + L-tyrosine + 2 NADP(+) = 3,5-diiodo-L-tyrosine + 2 NADPH + H(+). The enzyme catalyses iodide + L-tyrosine + NADP(+) = 3-iodo-L-tyrosine + NADPH. The catalysed reaction is 3-iodo-L-tyrosine + iodide + NADP(+) = 3,5-diiodo-L-tyrosine + NADPH + H(+). It carries out the reaction L-tyrosine + chloride + NADP(+) = 3-chloro-L-tyrosine + NADPH. It catalyses the reaction bromide + L-tyrosine + NADP(+) = 3-bromo-L-tyrosine + NADPH. Its function is as follows. Catalyzes the dehalogenation of halotyrosines such as 3-bromo-L-tyrosine, 3-chloro-L-tyrosine, 3-iodo-L-tyrosine and 3,5-diiodo-L-tyrosine. During thyroid hormone biosynthesis, facilitates iodide salvage by catalysing the oxidative NADPH-dependent deiodination of the halogenated by-products of thyroid hormone production, monoiodotyrosine (L-MIT) and diiodotyrosine (L-DIT). The scavanged iodide can then reenter the hormone-producing pathways. Acts more efficiently on 3-iodo-L-tyrosine than 3,5-diiodo-L-tyrosine. The polypeptide is Iodotyrosine deiodinase 1 (Iyd) (Rattus norvegicus (Rat)).